The following is a 349-amino-acid chain: NADH-quinone oxidoreductase subunit H (349 aa).

The next 8 membrane-spanning stretches (helical) occupy residues 16 to 36 (WPVV…MGCV), 88 to 108 (GLFI…WAVV), 123 to 143 (LLFL…AGWA), 157 to 177 (AAQM…VLLI), 202 to 222 (FLSW…ISGI), 264 to 284 (ILVS…PVGF), 285 to 305 (LPDG…IFLW), and 325 to 345 (VFIP…MSPL).

Belongs to the complex I subunit 1 family. In terms of assembly, NDH-1 is composed of 14 different subunits. Subunits NuoA, H, J, K, L, M, N constitute the membrane sector of the complex.

The protein resides in the cell inner membrane. It carries out the reaction a quinone + NADH + 5 H(+)(in) = a quinol + NAD(+) + 4 H(+)(out). Its function is as follows. NDH-1 shuttles electrons from NADH, via FMN and iron-sulfur (Fe-S) centers, to quinones in the respiratory chain. The immediate electron acceptor for the enzyme in this species is believed to be ubiquinone. Couples the redox reaction to proton translocation (for every two electrons transferred, four hydrogen ions are translocated across the cytoplasmic membrane), and thus conserves the redox energy in a proton gradient. This subunit may bind ubiquinone. This is NADH-quinone oxidoreductase subunit H from Azoarcus sp. (strain BH72).